The primary structure comprises 439 residues: Enolase (439 aa).

The substrate site is built by H157 and E166. The active-site Proton donor is E209. Mg(2+) contacts are provided by D244, E297, and D324. Substrate-binding residues include E297 and D324. K349 functions as the Proton acceptor in the catalytic mechanism. Substrate-binding positions include 376-379 (SHRS) and K400.

It belongs to the enolase family. Homodimer. It depends on Mg(2+) as a cofactor.

The protein resides in the cytoplasm. It carries out the reaction (2R)-2-phosphoglycerate = phosphoenolpyruvate + H2O. It participates in carbohydrate degradation; glycolysis; pyruvate from D-glyceraldehyde 3-phosphate: step 4/5. The polypeptide is Enolase (ENOL) (Mastigamoeba balamuthi (Phreatamoeba balamuthi)).